The chain runs to 382 residues: 3-dehydroquinate synthase (382 aa).

NAD(+) is bound by residues 81–86 (EGEISK), 115–119 (GVVGD), 139–140 (TS), Lys152, and Lys161. Residues Glu194, His256, and His274 each coordinate Zn(2+).

The protein belongs to the sugar phosphate cyclases superfamily. Dehydroquinate synthase family. Requires NAD(+) as cofactor. It depends on Co(2+) as a cofactor. The cofactor is Zn(2+).

The protein localises to the cytoplasm. The enzyme catalyses 7-phospho-2-dehydro-3-deoxy-D-arabino-heptonate = 3-dehydroquinate + phosphate. Its pathway is metabolic intermediate biosynthesis; chorismate biosynthesis; chorismate from D-erythrose 4-phosphate and phosphoenolpyruvate: step 2/7. In terms of biological role, catalyzes the conversion of 3-deoxy-D-arabino-heptulosonate 7-phosphate (DAHP) to dehydroquinate (DHQ). This is 3-dehydroquinate synthase from Bradyrhizobium diazoefficiens (strain JCM 10833 / BCRC 13528 / IAM 13628 / NBRC 14792 / USDA 110).